The following is a 168-amino-acid chain: tRNA-splicing endonuclease subunit Sen15 (168 aa).

Residues 1-32 (MEERSDSEPTPGCSGPGPAPVRDGGGAHTWAP) form a disordered region. S7 and S165 each carry phosphoserine.

Belongs to the SEN15 family. Homodimer. tRNA splicing endonuclease is a heterotetramer composed of TSEN2, TSEN15, TSEN34/LENG5 and TSEN54. tRNA splicing endonuclease complex also contains proteins of the pre-mRNA 3' end processing machinery such as CLP1, CPSF1, CPSF4 and CSTF2.

It localises to the nucleus. The protein localises to the nucleolus. Its function is as follows. Non-catalytic subunit of the tRNA-splicing endonuclease complex, a complex responsible for identification and cleavage of the splice sites in pre-tRNA. It cleaves pre-tRNA at the 5' and 3' splice sites to release the intron. The products are an intron and two tRNA half-molecules bearing 2',3' cyclic phosphate and 5'-OH termini. There are no conserved sequences at the splice sites, but the intron is invariably located at the same site in the gene, placing the splice sites an invariant distance from the constant structural features of the tRNA body. The tRNA splicing endonuclease is also involved in mRNA processing via its association with pre-mRNA 3'-end processing factors, establishing a link between pre-tRNA splicing and pre-mRNA 3'-end formation, suggesting that the endonuclease subunits function in multiple RNA-processing events. The chain is tRNA-splicing endonuclease subunit Sen15 (Tsen15) from Mus musculus (Mouse).